A 150-amino-acid chain; its full sequence is MVLCFPLLLLLLVLWGPVCPLHAWPKRLTKAHWFEIQHIQPSPLQCNRAMIGINNYTQHCKHQNTFLHDSFQNVAAVCDLLSIVCKNRRHNCHQSSKPVNMTDCRLTSGKYPQCRYSAAAQYKFFIVACDPPQKSDPPYKLVPVHLDSIL.

Residues 1 to 23 form the signal peptide; that stretch reads MVLCFPLLLLLLVLWGPVCPLHA. The Proton acceptor role is filled by His-38. 4 disulfides stabilise this stretch: Cys-46/Cys-104, Cys-60/Cys-114, Cys-78/Cys-129, and Cys-85/Cys-92. Asn-55 is a glycosylation site (N-linked (GlcNAc...) asparagine). Substrate contacts are provided by residues 61–65 and Lys-86; that span reads KHQNT. A glycan (N-linked (GlcNAc...) asparagine) is linked at Asn-100. Residue Arg-105 participates in substrate binding. The active-site Proton donor is the His-145.

It belongs to the pancreatic ribonuclease family. Interacts (via N-terminus) with bacterial lipopolysaccharide (LPS).

It is found in the secreted. The protein localises to the lysosome. The protein resides in the cytoplasmic granule. Ribonuclease which shows a preference for the pyrimidines uridine and cytosine. Has potent antibacterial activity against a range of Gram-positive and Gram-negative bacteria, including P.aeruginosa, A.baumanii, M.luteus, S.aureus, E.faecalis, E.faecium, S.saprophyticus and E.coli. Causes loss of bacterial membrane integrity, and also promotes agglutination of Gram-negative bacteria. Probably contributes to urinary tract sterility. Bactericidal activity is independent of RNase activity. The sequence is that of Ribonuclease K6 (RNASE6) from Gorilla gorilla gorilla (Western lowland gorilla).